Reading from the N-terminus, the 225-residue chain is Biosynthetic peptidoglycan transglycosylase (225 aa).

The helical transmembrane segment at 12–32 (IWFVAWRFLLLFVIVLFLFRF) threads the bilayer.

It belongs to the glycosyltransferase 51 family.

It localises to the cell inner membrane. The enzyme catalyses [GlcNAc-(1-&gt;4)-Mur2Ac(oyl-L-Ala-gamma-D-Glu-L-Lys-D-Ala-D-Ala)](n)-di-trans,octa-cis-undecaprenyl diphosphate + beta-D-GlcNAc-(1-&gt;4)-Mur2Ac(oyl-L-Ala-gamma-D-Glu-L-Lys-D-Ala-D-Ala)-di-trans,octa-cis-undecaprenyl diphosphate = [GlcNAc-(1-&gt;4)-Mur2Ac(oyl-L-Ala-gamma-D-Glu-L-Lys-D-Ala-D-Ala)](n+1)-di-trans,octa-cis-undecaprenyl diphosphate + di-trans,octa-cis-undecaprenyl diphosphate + H(+). Its pathway is cell wall biogenesis; peptidoglycan biosynthesis. In terms of biological role, peptidoglycan polymerase that catalyzes glycan chain elongation from lipid-linked precursors. This chain is Biosynthetic peptidoglycan transglycosylase, found in Marinomonas sp. (strain MWYL1).